Consider the following 407-residue polypeptide: Serine/threonine transporter SstT (407 aa).

The next 9 membrane-spanning stretches (helical) occupy residues 10–30, 42–62, 81–101, 141–161, 179–199, 218–238, 245–267, 288–308, and 316–336; these read AKGNLIIQICAGIALGILIGI, LGILFTSALKAIAPMLVFILI, IIILYIVGTFLASACAILANF, ALSSGNYLGILTWAIAGGAAL, VLKIVKFVVKLAPFGIFGLVA, ILLVATMLFVTFVINALIVFF, FPLIFICLRHSAFFAFFTRSSAA, ISIPLGATINMAGAAVTIAIL, and VGIEISLLQAFLLSIIATFAA.

Belongs to the dicarboxylate/amino acid:cation symporter (DAACS) (TC 2.A.23) family.

Its subcellular location is the cell inner membrane. The enzyme catalyses L-serine(in) + Na(+)(in) = L-serine(out) + Na(+)(out). It carries out the reaction L-threonine(in) + Na(+)(in) = L-threonine(out) + Na(+)(out). Its function is as follows. Involved in the import of serine and threonine into the cell, with the concomitant import of sodium (symport system). The sequence is that of Serine/threonine transporter SstT from Campylobacter jejuni subsp. doylei (strain ATCC BAA-1458 / RM4099 / 269.97).